A 141-amino-acid polypeptide reads, in one-letter code: MKWLLGAYVCLCLANILNALIPNPCCNVFALNETLIPSIYDINWIYITDPQTCKGVSVAQVFQRRTAQHMSTRYVCSNGFNVISFLLAVLRKLPLNTEEYNFKNRLITLQNSFLSKLGPDTTSAIKFKSKYGQLAKTRNLE.

Residues 1–19 form the signal peptide; sequence MKWLLGAYVCLCLANILNA. Residues 21 to 131 are interaction with gH; sequence IPNPCCNVFA…TSAIKFKSKY (111 aa).

This sequence belongs to the herpesviridae glycoprotein L family. Interacts with glycoprotein H (gH); this interaction is necessary for the correct processing and cell surface expression of gH. The heterodimer gH/gL seems to interact with gB trimers during fusion.

Its subcellular location is the virion membrane. The protein localises to the host cell membrane. It is found in the host Golgi apparatus. The protein resides in the host trans-Golgi network. Functionally, the heterodimer glycoprotein H-glycoprotein L is required for the fusion of viral and plasma membranes leading to virus entry into the host cell. Acts as a functional inhibitor of gH and maintains gH in an inhibited form. Upon binding to host integrins, gL dissociates from gH leading to activation of the viral fusion glycoproteins gB and gH. In Saimiriine herpesvirus 2 (strain 11) (SaHV-2), this protein is Envelope glycoprotein L.